We begin with the raw amino-acid sequence, 301 residues long: ATP synthase gamma chain (301 aa).

The protein belongs to the ATPase gamma chain family. As to quaternary structure, F-type ATPases have 2 components, CF(1) - the catalytic core - and CF(0) - the membrane proton channel. CF(1) has five subunits: alpha(3), beta(3), gamma(1), delta(1), epsilon(1). CF(0) has three main subunits: a, b and c.

The protein localises to the cell inner membrane. Its function is as follows. Produces ATP from ADP in the presence of a proton gradient across the membrane. The gamma chain is believed to be important in regulating ATPase activity and the flow of protons through the CF(0) complex. In Helicobacter pylori (strain Shi470), this protein is ATP synthase gamma chain.